We begin with the raw amino-acid sequence, 579 residues long: Transcription factor COE2 (579 aa).

An interaction with DNA region spans residues R63–N66. The segment at C149–C168 adopts a C5-type zinc-finger fold. Interaction with DNA stretches follow at residues N195–N202 and N234–K237. Residues P260 to T343 enclose the IPT/TIG domain. Disordered regions lie at residues G442–N482, A514–S533, and L549–M579. Positions G449–N459 are enriched in polar residues. Composition is skewed to low complexity over residues S460–S472 and P521–S533.

The protein belongs to the COE family.

It is found in the nucleus. The polypeptide is Transcription factor COE2 (coe2) (Danio rerio (Zebrafish)).